The following is a 218-amino-acid chain: Thiopurine S-methyltransferase (218 aa).

S-adenosyl-L-methionine-binding residues include Trp-10, Leu-45, Glu-66, and Arg-123.

The protein belongs to the class I-like SAM-binding methyltransferase superfamily. TPMT family.

Its subcellular location is the cytoplasm. The catalysed reaction is S-adenosyl-L-methionine + a thiopurine = S-adenosyl-L-homocysteine + a thiopurine S-methylether.. In Shewanella baltica (strain OS195), this protein is Thiopurine S-methyltransferase.